Here is an 81-residue protein sequence, read N- to C-terminus: ATP synthase subunit c, chloroplastic (81 aa).

Transmembrane regions (helical) follow at residues 3 to 23 and 57 to 77; these read PIICAASVIGAGLAIGLGAIG and LAFMEALTIYGLVVALAIIFA.

This sequence belongs to the ATPase C chain family. F-type ATPases have 2 components, F(1) - the catalytic core - and F(0) - the membrane proton channel. F(1) has five subunits: alpha(3), beta(3), gamma(1), delta(1), epsilon(1). F(0) has four main subunits: a(1), b(1), b'(1) and c(10-14). The alpha and beta chains form an alternating ring which encloses part of the gamma chain. F(1) is attached to F(0) by a central stalk formed by the gamma and epsilon chains, while a peripheral stalk is formed by the delta, b and b' chains.

The protein localises to the plastid. The protein resides in the chloroplast thylakoid membrane. Functionally, f(1)F(0) ATP synthase produces ATP from ADP in the presence of a proton or sodium gradient. F-type ATPases consist of two structural domains, F(1) containing the extramembraneous catalytic core and F(0) containing the membrane proton channel, linked together by a central stalk and a peripheral stalk. During catalysis, ATP synthesis in the catalytic domain of F(1) is coupled via a rotary mechanism of the central stalk subunits to proton translocation. Key component of the F(0) channel; it plays a direct role in translocation across the membrane. A homomeric c-ring of between 10-14 subunits forms the central stalk rotor element with the F(1) delta and epsilon subunits. In Euglena gracilis, this protein is ATP synthase subunit c, chloroplastic.